The following is a 633-amino-acid chain: Guanylate-binding protein 6 (633 aa).

The GTPase domain (Globular) stretch occupies residues 1–310 (MESGPKMLAP…EAINSGAVPC (310 aa)). One can recognise a GB1/RHD3-type G domain in the interval 35-277 (SQPVVVVAIV…FCSYIFTHAR (243 aa)). GTP contacts are provided by residues 45 to 52 (GLYRTGKS), 67 to 69 (LGS), and 97 to 101 (DTEGL).

Belongs to the TRAFAC class dynamin-like GTPase superfamily. GB1/RHD3 GTPase family. GB1 subfamily. In terms of processing, (Microbial infection) Ubiquitinated by S.flexneri IpaH9.8, leading to its degradation by the proteasome, thereby preventing its ability to promote host defense against bacterial infection.

Its subcellular location is the cytoplasmic vesicle. It catalyses the reaction GTP + H2O = GDP + phosphate + H(+). Interferon (IFN)-inducible GTPase that plays important roles in innate immunity against a diverse range of bacterial, viral and protozoan pathogens, such as bacterial pathogens Listeria monocytogenes and Mycobacterium bovis BCG as well as the protozoan pathogen Toxoplasma gondii. Confers protection to several pathogens, including the bacterial pathogens Listeria monocytogenes and Mycobacterium bovis BCG as well as the protozoan pathogen Toxoplasma gondii. In Homo sapiens (Human), this protein is Guanylate-binding protein 6 (GBP6).